A 383-amino-acid chain; its full sequence is Protein delta homolog 2 (383 aa).

An N-terminal signal peptide occupies residues 1-26 (MPSGCRCLHLVCLLCILGAPVKPARG). EGF-like domains are found at residues 27–58 (NDCS…LHCE), 62–89 (RMPG…KFCD), 91–129 (DEHI…RDCE), and 131–172 (KAGP…ARCE). Topologically, residues 27–306 (NDCSSLCDLA…RQEAGLGEPS (280 aa)) are extracellular. 17 disulfides stabilise this stretch: Cys-29/Cys-40, Cys-33/Cys-46, Cys-48/Cys-57, Cys-66/Cys-71, Cys-79/Cys-88, Cys-95/Cys-107, Cys-101/Cys-117, Cys-119/Cys-128, Cys-135/Cys-148, Cys-142/Cys-160, Cys-162/Cys-171, Cys-178/Cys-189, Cys-183/Cys-198, Cys-200/Cys-209, Cys-216/Cys-227, Cys-221/Cys-236, and Cys-238/Cys-247. Asn-157 carries N-linked (GlcNAc...) asparagine glycosylation. The region spanning 174–210 (NVDDCLMRPCANGATCLDGINRFSCLCPEGFTGRFCT) is the EGF-like 5; calcium-binding domain. The 37-residue stretch at 212–248 (NLDDCASRPCQRGARCRDRVHDFDCLCPSGYGGKTCE) folds into the EGF-like 6; calcium-binding domain. A helical transmembrane segment spans residues 307–327 (LVAVVVFGAVTAALVLSTVLL). At 328 to 383 (TLRAWRRGFCPPGPCCYPAPHYAPARQDQECQVSMLPTGLPLPPDLPPEPGKTTAL) the chain is on the cytoplasmic side. The segment at 364–383 (PTGLPLPPDLPPEPGKTTAL) is disordered. The span at 367 to 377 (LPLPPDLPPEP) shows a compositional bias: pro residues.

The protein resides in the membrane. Regulates adipogenesis. This Bos taurus (Bovine) protein is Protein delta homolog 2 (DLK2).